The following is a 921-amino-acid chain: MDAPATASRQPIAEEPRMSQESSLSTVSTTSLVFDRLHEHNEKSYHSSSQRRRAPSASRGGYADHPDDDDDDDESYKEADTNDLETGPFLAPASVMMRRVGVDRGLKKVILILAAAFLFAWGAALFVFLSNKSYKHASTIDHDPSATSRGSGKPVTLDQVISGFWYPTSHSISWIEGPNGEDGLLLEQGARGKDYLVVEDVRSGNKDSQVSANVVQSRTLMKNPWINVGGRQLAPSDTRPSKDMKKVLVSTDRQRNWRYSYTALYWIFDVETQTAEALDPEHPDGRVQLATWSPQSNAIVFTRDNNLFLRKLDGDKKVTQITNDGGPEYFYGIPDWVYEEEVFATNSATWYSEDGKYVAFLRTNETGVPEYPLQYFLSRPSGKEKPPGEETYPDEKRIKYPRAGSHNPVVDLLFFDVERGDVFSVDIDGGFADDDRLINMVLWANDKVLIKETNRVSDIMRVVLVDVVARTGKTVNTIDVGELDGGWFEISHTTQFIPADPANGRPQDGYIDTVVHGNGDHIAYFSPMDNAEPVYLTGGDWEVDDGPSAVDLKNNLVYFVATKESSIQRHVYSVHLNRSDLKPFTDTKFESYYDISFSSGAGYALLSYQGPKIPWQKVVSTPSSPVSYEHVVEKNEDLAENAKKYELPILNYGTLKVDGVELNYVERRPPHFDEKKKYPVLFQQYSGPGSQSVHKKFAVDFQSYVASALGYLVVTVDGRGTGFIGRKNRVLIRDHLGYWEAHDQIAAAQAWAAKKYVDPARIAIWGWSYGGFNTLKTLEMDAGRTFSYGMAVAPVTDWRFYDSIYTERYMRTPQLNPSGYDQTAVSNVSALAGNVRWLMMHGVGDDNVHYQNTLTLLDKLDLNGIENYDVHVFPDSDHGIYFHGANRIVYDKLSNWLINAFNGEWLKVAGAKPIVEPKARV.

The tract at residues 1-87 (MDAPATASRQ…EADTNDLETG (87 aa)) is disordered. The Cytoplasmic portion of the chain corresponds to 1 to 108 (MDAPATASRQ…RVGVDRGLKK (108 aa)). Over residues 22–33 (SSLSTVSTTSLV) the composition is skewed to low complexity. Positions 35–45 (DRLHEHNEKSY) are enriched in basic and acidic residues. Over residues 66-75 (PDDDDDDDES) the composition is skewed to acidic residues. A helical; Signal-anchor for type II membrane protein membrane pass occupies residues 109 to 129 (VILILAAAFLFAWGAALFVFL). At 130–921 (SNKSYKHAST…KPIVEPKARV (792 aa)) the chain is on the vacuolar side. 3 N-linked (GlcNAc...) asparagine glycosylation sites follow: Asn131, Asn364, and Asn577. Ser768 (charge relay system) is an active-site residue. A glycan (N-linked (GlcNAc...) asparagine) is linked at Asn827. Active-site charge relay system residues include Asp845 and His878.

The protein belongs to the peptidase S9B family.

Its subcellular location is the vacuole membrane. The catalysed reaction is Release of an N-terminal dipeptide, Xaa-Yaa-|-Zaa-, from a polypeptide, preferentially when Yaa is Pro, provided Zaa is neither Pro nor hydroxyproline.. In terms of biological role, type IV dipeptidyl-peptidase which removes N-terminal dipeptides sequentially from polypeptides having unsubstituted N-termini provided that the penultimate residue is proline. This chain is Probable dipeptidyl-aminopeptidase B (DAPB), found in Colletotrichum graminicola (strain M1.001 / M2 / FGSC 10212) (Maize anthracnose fungus).